Reading from the N-terminus, the 75-residue chain is Cruzioseptin-7 (75 aa).

The first 22 residues, 1-22 (MAKLKKSLFLVLFLGLVSLSIC), serve as a signal peptide directing secretion. A propeptide spanning residues 23–43 (EEEKREEENEEVQEDDDQSEE) is cleaved from the precursor. A disordered region spans residues 25 to 44 (EKREEENEEVQEDDDQSEEK). Residues 30-41 (ENEEVQEDDDQS) show a composition bias toward acidic residues.

In terms of tissue distribution, expressed by the skin glands.

The protein localises to the secreted. Functionally, has antimicrobial activity. In Cruziohyla calcarifer (Splendid leaf frog), this protein is Cruzioseptin-7.